We begin with the raw amino-acid sequence, 515 residues long: 2,3-bisphosphoglycerate-independent phosphoglycerate mutase (515 aa).

Residues D14 and S64 each coordinate Mn(2+). Catalysis depends on S64, which acts as the Phosphoserine intermediate. Substrate is bound by residues H125, 155–156, R187, R193, 263–266, and K337; these read RD and RADR. Residues D404, H408, D445, H446, and H464 each contribute to the Mn(2+) site.

This sequence belongs to the BPG-independent phosphoglycerate mutase family. In terms of assembly, monomer. Requires Mn(2+) as cofactor.

It catalyses the reaction (2R)-2-phosphoglycerate = (2R)-3-phosphoglycerate. It participates in carbohydrate degradation; glycolysis; pyruvate from D-glyceraldehyde 3-phosphate: step 3/5. Its function is as follows. Catalyzes the interconversion of 2-phosphoglycerate and 3-phosphoglycerate. In Yersinia pestis bv. Antiqua (strain Antiqua), this protein is 2,3-bisphosphoglycerate-independent phosphoglycerate mutase.